A 402-amino-acid chain; its full sequence is MSRVSQARNLGKYFLLIDNMLVVLGFFVVFPLISIRFVDQMGWAAVMVGIALGLRQFIQQGLGIFGGAIADRFGAKPMIVTGMLMRAAGFATMGIAHEPWLLWFSCLLSGLGGTLFDPPRSALVVKLIRPQQRGRFFSLLMMQDSAGAVIGALLGSWLLQYDFRLVCATGAVLFVLCAAFNAWLLPAWKLSTVRTPVREGMTRVMRDKRFVTYVLTLAGYYMLAVQVMLMLPIMVNDVAGAPSAVKWMYAIEACLSLTLLYPIARWSEKHFRLEHRLMAGLLIMSLSMMPVGMVSGLQQLFTLICLFYIGSIIAEPARETLSASLADARARGSYMGFSRLGLAIGGAIGYIGGGWLFDLGKSAHQPELPWMMLGIIGIFTFLALGWQFSQKRTARRLLERDA.

Over 1 to 12 the chain is Cytoplasmic; that stretch reads MSRVSQARNLGK. The helical transmembrane segment at 13–33 threads the bilayer; the sequence is YFLLIDNMLVVLGFFVVFPLI. The Periplasmic segment spans residues 34–98; it reads SIRFVDQMGW…GFATMGIAHE (65 aa). Residues 99-116 traverse the membrane as a helical segment; that stretch reads PWLLWFSCLLSGLGGTLF. Over 117–138 the chain is Cytoplasmic; it reads DPPRSALVVKLIRPQQRGRFFS. Residues 139–159 form a helical membrane-spanning segment; sequence LLMMQDSAGAVIGALLGSWLL. Over 160–164 the chain is Periplasmic; the sequence is QYDFR. A helical transmembrane segment spans residues 165–185; it reads LVCATGAVLFVLCAAFNAWLL. Over 186–213 the chain is Cytoplasmic; the sequence is PAWKLSTVRTPVREGMTRVMRDKRFVTY. A helical membrane pass occupies residues 214 to 234; sequence VLTLAGYYMLAVQVMLMLPIM. Residues 235–243 lie on the Periplasmic side of the membrane; it reads VNDVAGAPS. The helical transmembrane segment at 244 to 264 threads the bilayer; the sequence is AVKWMYAIEACLSLTLLYPIA. At 265–276 the chain is on the cytoplasmic side; that stretch reads RWSEKHFRLEHR. Residues 277–297 form a helical membrane-spanning segment; it reads LMAGLLIMSLSMMPVGMVSGL. Topologically, residues 298–299 are periplasmic; it reads QQ. A helical transmembrane segment spans residues 300–320; that stretch reads LFTLICLFYIGSIIAEPARET. Topologically, residues 321–339 are cytoplasmic; it reads LSASLADARARGSYMGFSR. The chain crosses the membrane as a helical span at residues 340-360; it reads LGLAIGGAIGYIGGGWLFDLG. At 361–367 the chain is on the periplasmic side; that stretch reads KSAHQPE. A helical membrane pass occupies residues 368 to 388; the sequence is LPWMMLGIIGIFTFLALGWQF. Over 389-402 the chain is Cytoplasmic; the sequence is SQKRTARRLLERDA.

Belongs to the major facilitator superfamily. DHA1 family. MdtH (TC 2.A.1.2.21) subfamily.

Its subcellular location is the cell inner membrane. Functionally, confers resistance to norfloxacin and enoxacin. The polypeptide is Multidrug resistance protein MdtH (Escherichia coli O7:K1 (strain IAI39 / ExPEC)).